The chain runs to 152 residues: Small ribosomal subunit protein uS13A (152 aa).

Belongs to the universal ribosomal protein uS13 family. Component of the small ribosomal subunit (SSU). Mature yeast ribosomes consist of a small (40S) and a large (60S) subunit. The 40S small subunit contains 1 molecule of ribosomal RNA (18S rRNA) and at least 33 different proteins. The large 60S subunit contains 3 rRNA molecules (25S, 5.8S and 5S rRNA) and at least 46 different proteins.

The protein resides in the cytoplasm. In terms of biological role, component of the ribosome, a large ribonucleoprotein complex responsible for the synthesis of proteins in the cell. The small ribosomal subunit (SSU) binds messenger RNAs (mRNAs) and translates the encoded message by selecting cognate aminoacyl-transfer RNA (tRNA) molecules. The large subunit (LSU) contains the ribosomal catalytic site termed the peptidyl transferase center (PTC), which catalyzes the formation of peptide bonds, thereby polymerizing the amino acids delivered by tRNAs into a polypeptide chain. The nascent polypeptides leave the ribosome through a tunnel in the LSU and interact with protein factors that function in enzymatic processing, targeting, and the membrane insertion of nascent chains at the exit of the ribosomal tunnel. This is Small ribosomal subunit protein uS13A (rps1801) from Schizosaccharomyces pombe (strain 972 / ATCC 24843) (Fission yeast).